The primary structure comprises 298 residues: Lipoyl synthase (298 aa).

The [4Fe-4S] cluster site is built by C40, C45, C51, C67, C71, C74, and S280. Positions 53–269 (AVRKTATFMI…KEIALSKGFS (217 aa)) constitute a Radical SAM core domain.

The protein belongs to the radical SAM superfamily. Lipoyl synthase family. Requires [4Fe-4S] cluster as cofactor.

The protein localises to the cytoplasm. It carries out the reaction [[Fe-S] cluster scaffold protein carrying a second [4Fe-4S](2+) cluster] + N(6)-octanoyl-L-lysyl-[protein] + 2 oxidized [2Fe-2S]-[ferredoxin] + 2 S-adenosyl-L-methionine + 4 H(+) = [[Fe-S] cluster scaffold protein] + N(6)-[(R)-dihydrolipoyl]-L-lysyl-[protein] + 4 Fe(3+) + 2 hydrogen sulfide + 2 5'-deoxyadenosine + 2 L-methionine + 2 reduced [2Fe-2S]-[ferredoxin]. It participates in protein modification; protein lipoylation via endogenous pathway; protein N(6)-(lipoyl)lysine from octanoyl-[acyl-carrier-protein]. Its function is as follows. Catalyzes the radical-mediated insertion of two sulfur atoms into the C-6 and C-8 positions of the octanoyl moiety bound to the lipoyl domains of lipoate-dependent enzymes, thereby converting the octanoylated domains into lipoylated derivatives. The protein is Lipoyl synthase of Bacillus mycoides (strain KBAB4) (Bacillus weihenstephanensis).